The chain runs to 96 residues: Small ribosomal subunit protein bS6 (96 aa).

It belongs to the bacterial ribosomal protein bS6 family.

In terms of biological role, binds together with bS18 to 16S ribosomal RNA. The sequence is that of Small ribosomal subunit protein bS6 from Salinispora tropica (strain ATCC BAA-916 / DSM 44818 / JCM 13857 / NBRC 105044 / CNB-440).